Reading from the N-terminus, the 813-residue chain is Receptor-like protein 48 (813 aa).

The first 30 residues, 1 to 30, serve as a signal peptide directing secretion; sequence MHSCSERRMMTVIWSLCLIFCLSNSILAIA. Residues 31–786 lie on the Extracellular side of the membrane; the sequence is KDLCLPDQRD…EDEEKEEKNQ (756 aa). Residues Asn69, Asn105, and Asn123 are each glycosylated (N-linked (GlcNAc...) asparagine). 3 LRR repeats span residues 111-134, 136-159, and 160-182; these read LQHLQSLELSSNNISGILPDSIGN, KYLRSLSFRTCHLFGKIPSSLGSL, and SYLTHLDLSYNDFTSEGPDSGGN. N-linked (GlcNAc...) asparagine glycosylation is found at Asn195 and Asn216. 21 LRR repeats span residues 196–219, 220–244, 245–260, 261–285, 288–310, 311–335, 336–359, 361–381, 382–405, 406–432, 434–450, 451–473, 475–498, 500–521, 523–544, 545–571, 572–595, 642–666, 667–690, 691–714, and 716–739; these read LSSVTWIDLGSNQLKGMLPSNMSS, LSKLVSFDISENSFSGSIPSSLFMI, PSLNFSGPLEIGNISS, HSELGYLYMGENNFNGPIPGSLSKL, LRDLSLSFWNTGRGIVDFSIFLH, LKSLCSLDLSYLNTRSMVDLSFFSH, LMSLDELDLSGINLKISSTLSFPS, TGTLILASCNIVEFPKFLENQ, TSLFYLDISANHIEGQVPEWLWRL, PTLSFVNIAQNSFSGELPMLPNSIYSF, ASDNQFSGEIPRTVCEL, VSLNTLVLSNNKFSGSIPRCFEN, KTISILHLRNNSLSGVFPKEIISE, LTSLDVGHNWLSGQLPKSLIKC, DLEFLNVEDNRINDKFPFWLRS, LSNLQILVLRSNEFYGPIFSLEDSLSF, PKLRIFDISENHFTGVLPSDYFAG, FTIYKTIDVSGNRLEGDIPESIGIL, KELIVLNMSNNAFTGHIPPSLSNL, SNLQSLDLSQNRLSGSIPPELGKL, and FLEWMNFSYNRLEGPIPQATQIQS. N-linked (GlcNAc...) asparagine glycans are attached at residues Asn248 and Asn257. Asn380 is a glycosylation site (N-linked (GlcNAc...) asparagine). An N-linked (GlcNAc...) asparagine glycan is attached at Asn484. N-linked (GlcNAc...) asparagine glycosylation is found at Asn673 and Asn689. Residues Asn721 and Asn741 are each glycosylated (N-linked (GlcNAc...) asparagine). Residues 756–785 form a disordered region; that stretch reads FLNKCGGEEEEEEEATKQEEDEDEEKEEKN. Residues 763–781 are compositionally biased toward acidic residues; the sequence is EEEEEEEATKQEEDEDEEK. The chain crosses the membrane as a helical span at residues 787–807; that stretch reads VFSWIAAAIGYVPGVFCGLTI. The Cytoplasmic portion of the chain corresponds to 808-813; the sequence is AHILTS.

The protein belongs to the RLP family.

The protein resides in the cell membrane. Functionally, plays a role in root hair development. In Arabidopsis thaliana (Mouse-ear cress), this protein is Receptor-like protein 48.